A 70-amino-acid chain; its full sequence is ATP synthase subunit c (70 aa).

A run of 2 helical transmembrane segments spans residues 4–24 and 45–65; these read IAAA…NGLI and LMFI…VIAF.

Belongs to the ATPase C chain family. F-type ATPases have 2 components, F(1) - the catalytic core - and F(0) - the membrane proton channel. F(1) has five subunits: alpha(3), beta(3), gamma(1), delta(1), epsilon(1). F(0) has three main subunits: a(1), b(2) and c(10-14). The alpha and beta chains form an alternating ring which encloses part of the gamma chain. F(1) is attached to F(0) by a central stalk formed by the gamma and epsilon chains, while a peripheral stalk is formed by the delta and b chains.

The protein localises to the cell membrane. In terms of biological role, f(1)F(0) ATP synthase produces ATP from ADP in the presence of a proton or sodium gradient. F-type ATPases consist of two structural domains, F(1) containing the extramembraneous catalytic core and F(0) containing the membrane proton channel, linked together by a central stalk and a peripheral stalk. During catalysis, ATP synthesis in the catalytic domain of F(1) is coupled via a rotary mechanism of the central stalk subunits to proton translocation. Functionally, key component of the F(0) channel; it plays a direct role in translocation across the membrane. A homomeric c-ring of between 10-14 subunits forms the central stalk rotor element with the F(1) delta and epsilon subunits. The protein is ATP synthase subunit c of Bacillus licheniformis (strain ATCC 14580 / DSM 13 / JCM 2505 / CCUG 7422 / NBRC 12200 / NCIMB 9375 / NCTC 10341 / NRRL NRS-1264 / Gibson 46).